The sequence spans 38 residues: Photosystem II reaction center protein X 1 (38 aa).

A helical membrane pass occupies residues 8–28 (FLWSLLYGAVVLGLLFGAIVF).

Belongs to the PsbX family. Type 1 subfamily. In terms of assembly, PSII is composed of 1 copy each of membrane proteins PsbA, PsbB, PsbC, PsbD, PsbE, PsbF, PsbH, PsbI, PsbJ, PsbK, PsbL, PsbM, PsbT, PsbX, PsbY, PsbZ, Psb30/Ycf12, peripheral proteins PsbO, CyanoQ (PsbQ), PsbU, PsbV and a large number of cofactors. It forms dimeric complexes.

It is found in the cellular thylakoid membrane. Involved in the binding and/or turnover of quinones at the Q(B) site of photosystem II (PSII). PSII is a light-driven water plastoquinone oxidoreductase, using light energy to abstract electrons from H(2)O, generating a proton gradient subsequently used for ATP formation. The sequence is that of Photosystem II reaction center protein X 1 from Synechococcus sp. (strain JA-3-3Ab) (Cyanobacteria bacterium Yellowstone A-Prime).